Consider the following 373-residue polypeptide: Inhibitor of nuclear factor kappa-B kinase-interacting protein (373 aa).

The span at 1–11 (MSEVKSRKKPG) shows a compositional bias: basic residues. A disordered region spans residues 1-38 (MSEVKSRKKPGPKVAAPEPEKRSDGRKNPEARGGAGWA). A compositionally biased stretch (basic and acidic residues) spans 18–30 (EPEKRSDGRKNPE). A helical membrane pass occupies residues 43–59 (GLSLLSLATSLGLAWLV). 2 coiled-coil regions span residues 64–257 (EKFA…DKLS) and 290–325 (TERK…LEGI). The N-linked (GlcNAc...) asparagine glycan is linked to Asn-151.

N-glycosylated at Asn-151.

The protein resides in the endoplasmic reticulum membrane. Its function is as follows. Target of p53/TP53 with pro-apoptotic function. This chain is Inhibitor of nuclear factor kappa-B kinase-interacting protein (Ikbip), found in Rattus norvegicus (Rat).